The following is a 490-amino-acid chain: Costunolide synthase (490 aa).

Residues 3-23 (PLTIVSLAVASFLLFAFWALS) form a helical; Signal-anchor for type II membrane protein membrane-spanning segment. N-linked (GlcNAc...) asparagine glycans are attached at residues Asn167 and Asn255. Cys432 serves as a coordination point for heme.

The protein belongs to the cytochrome P450 family. Requires heme as cofactor.

The protein localises to the membrane. It catalyses the reaction germacra-1(10),4,11(13)-trien-12-oate + reduced [NADPH--hemoprotein reductase] + O2 = (+)-costunolide + oxidized [NADPH--hemoprotein reductase] + 2 H2O. It functions in the pathway secondary metabolite biosynthesis; terpenoid biosynthesis. Involved in the biosynthesis of germacrene-derived sesquiterpene lactones. Component of the parthenolide biosynthetic pathway; parthenolide and conjugates are promising anti-cancer drugs highly active against colon cancer cells. Hydroxylates germacrene A acid to 6-alpha-hydroxy-germacrne A acid, a precursor of sesquiterpene lactones that spontaneously undergoes a lactonization which yields costunolide. The polypeptide is Costunolide synthase (Lactuca sativa (Garden lettuce)).